Here is a 311-residue protein sequence, read N- to C-terminus: Serine hydrolase-like protein (311 aa).

Residues 27 to 227 (PPVLCLHGWL…FVSKEMFVHS (201 aa)) form the AB hydrolase-1 domain. Residue serine 102 is part of the active site. Serine 210 carries the phosphoserine modification.

This sequence belongs to the AB hydrolase superfamily. As to expression, ubiquitous. High protein expression in skeletal and cardiac muscle.

Its subcellular location is the cytoplasm. The protein localises to the perinuclear region. It is found in the peroxisome. Functionally, probable serine hydrolase. May be related to cell muscle hypertrophy. This is Serine hydrolase-like protein (Serhl) from Mus musculus (Mouse).